The chain runs to 106 residues: UPF0060 membrane protein Smed_0659 (106 aa).

A run of 3 helical transmembrane segments spans residues phenylalanine 4 to tryptophan 24, glycine 31 to valine 51, and alanine 61 to alanine 81.

Belongs to the UPF0060 family.

The protein localises to the cell inner membrane. This is UPF0060 membrane protein Smed_0659 from Sinorhizobium medicae (strain WSM419) (Ensifer medicae).